A 518-amino-acid chain; its full sequence is Glutamate--cysteine ligase (518 aa).

It belongs to the glutamate--cysteine ligase type 1 family. Type 1 subfamily.

It catalyses the reaction L-cysteine + L-glutamate + ATP = gamma-L-glutamyl-L-cysteine + ADP + phosphate + H(+). The protein operates within sulfur metabolism; glutathione biosynthesis; glutathione from L-cysteine and L-glutamate: step 1/2. This Klebsiella pneumoniae subsp. pneumoniae (strain ATCC 700721 / MGH 78578) protein is Glutamate--cysteine ligase.